Reading from the N-terminus, the 284-residue chain is Bifunctional protein FolD (284 aa).

NADP(+)-binding positions include 166 to 168 and Ile232; that span reads GAS.

The protein belongs to the tetrahydrofolate dehydrogenase/cyclohydrolase family. In terms of assembly, homodimer.

The enzyme catalyses (6R)-5,10-methylene-5,6,7,8-tetrahydrofolate + NADP(+) = (6R)-5,10-methenyltetrahydrofolate + NADPH. It catalyses the reaction (6R)-5,10-methenyltetrahydrofolate + H2O = (6R)-10-formyltetrahydrofolate + H(+). The protein operates within one-carbon metabolism; tetrahydrofolate interconversion. In terms of biological role, catalyzes the oxidation of 5,10-methylenetetrahydrofolate to 5,10-methenyltetrahydrofolate and then the hydrolysis of 5,10-methenyltetrahydrofolate to 10-formyltetrahydrofolate. The sequence is that of Bifunctional protein FolD from Shewanella sp. (strain ANA-3).